A 385-amino-acid polypeptide reads, in one-letter code: A-type ATP synthase subunit C (385 aa).

This sequence belongs to the V-ATPase V0D/AC39 subunit family. Has multiple subunits with at least A(3), B(3), C, D, E, F, H, I and proteolipid K(x).

It is found in the cell membrane. Component of the A-type ATP synthase that produces ATP from ADP in the presence of a proton gradient across the membrane. In Methanosphaera stadtmanae (strain ATCC 43021 / DSM 3091 / JCM 11832 / MCB-3), this protein is A-type ATP synthase subunit C.